Consider the following 250-residue polypeptide: DNA repair protein RecO (250 aa).

This sequence belongs to the RecO family.

In terms of biological role, involved in DNA repair and RecF pathway recombination. The protein is DNA repair protein RecO of Staphylococcus aureus (strain MRSA252).